The sequence spans 71 residues: uncharacterized protein (71 aa).

Residues 1–21 (MGVGLHGDHVGGELNSANAFT) form the signal peptide.

This is an uncharacterized protein from Haemophilus influenzae (strain ATCC 51907 / DSM 11121 / KW20 / Rd).